Reading from the N-terminus, the 404-residue chain is Serine/threonine-protein kinase UCN (404 aa).

In terms of domain architecture, Protein kinase spans 22-340 (LKVLKLLGKG…AAEIKEHAFF (319 aa)). ATP contacts are provided by residues 28 to 36 (LGKGATGTV) and K55. D153 serves as the catalytic Proton acceptor. The disordered stretch occupies residues 185–207 (EFYHLSDPEPDPNPESNLSHNKK). The AGC-kinase C-terminal domain maps to 341 to 404 (KGVRWELLTE…CSENNPFVDF (64 aa)).

It belongs to the protein kinase superfamily. AGC Ser/Thr protein kinase family. Expressed in the epidermis and cortex of the transition zone of the root apex and developing flowers. Expressed in rosette leaves, stems and siliques.

It localises to the cytoplasm. It is found in the nucleus. The enzyme catalyses L-seryl-[protein] + ATP = O-phospho-L-seryl-[protein] + ADP + H(+). The catalysed reaction is L-threonyl-[protein] + ATP = O-phospho-L-threonyl-[protein] + ADP + H(+). In terms of biological role, regulates planar ovule integument development by suppressing aberrantly oriented growth. Maintains planar growth of integuments by repressing the developmental regulator and transcription factor KAN4 which is involved in the control of early integument growth and polarity. Restricts growth in stamen filaments, petals, and cotyledons. The protein is Serine/threonine-protein kinase UCN of Arabidopsis thaliana (Mouse-ear cress).